We begin with the raw amino-acid sequence, 707 residues long: MASPADSCIQFTRHASDVLLNLNRLRSRDILTDVVIVVSREQFRAHKTVLMACSGLFYSIFTDQLKCNLSVINLDPEISPEGFCILLDFMYTSRLNLREGNIMAVMTTAMYLQMEHVVDTCRKFIKASEAEMAPALKPPREEFLNSRMLMPHDIMAYRGREVVENNMPLRNTPGCESRAFAPPLYSGLSTPPASYPMYSHLPLSTFLFSDEELRDAPRMPVANPFPKERALPCDSARQVPNEYSRPAMEVSPSLCHSNIYSPKEAVPEEARSDIHYSVPEGPKPAVPSARNAPYFPCDKASKEEERPSSEDEIALHFEPPNAPLNRKGLVSPQSPQKSDCQPNSPTESCSSKNACILQASGSPPAKSPTDPKACNWKKYKFIVLNSLNQNAKPEGSEQAELGRLSPRAYPAPPACQPPMEPANLDLQSPTKLSASGEDSTIPQASRLNNLVNRSLAGSPRSSSESHSPLYMHPPKCTSCGSQSPQHTEMCLHTAGPTFPEEMGETQSEYSDSSCENGTFFCNECDCRFSEEASLKRHTLQTHSDKPYKCDRCQASFRYKGNLASHKTVHTGEKPYRCNICGAQFNRPANLKTHTRIHSGEKPYKCETCGARFVQVAHLRAHVLIHTGEKPYPCEICGTRFRHLQTLKSHLRIHTGEKPYHCEKCNLHFRHKSQLRLHLRQKHGAITNTKVQYRVSAADLPPELPKAC.

Positions 32 to 99 (TDVVIVVSRE…MYTSRLNLRE (68 aa)) constitute a BTB domain. A disordered region spans residues 275–350 (HYSVPEGPKP…QPNSPTESCS (76 aa)). Residues 299-315 (KASKEEERPSSEDEIAL) are compositionally biased toward basic and acidic residues. Positions 331–350 (SPQSPQKSDCQPNSPTESCS) are enriched in polar residues. Ser-334 is subject to Phosphoserine. A Phosphoserine; by MAPK1 modification is found at Ser-344. Phosphoserine is present on Ser-362. Residues 377–380 (KKYK) form a required for interaction with NuRD complex and for transcriptional repressor activity region. At Lys-380 the chain carries N6-acetyllysine; by EP300. Ser-405 is modified (phosphoserine). The segment at 405-469 (SPRAYPAPPA…RSSSESHSPL (65 aa)) is disordered. Positions 409–420 (YPAPPACQPPME) are enriched in pro residues. The segment covering 425-452 (DLQSPTKLSASGEDSTIPQASRLNNLVN) has biased composition (polar residues). A compositionally biased stretch (low complexity) spans 458–467 (SPRSSSESHS). C2H2-type zinc fingers lie at residues 519–542 (FFCN…LQTH), 547–569 (YKCD…KTVH), 575–597 (YRCN…TRIH), 603–625 (YKCE…VLIH), 631–653 (YPCE…LRIH), and 659–682 (YHCE…RQKH).

As to quaternary structure, homodimer. Interacts (via BTB domain) with the corepressors BCOR, NCOR1 and SMRT/NCOR2; the interactions are direct. Forms preferably ternary complexes with BCOR and SMRT/NCOR2 on target gene promoters but, on enhancer elements, interacts with SMRT/NCOR2 and HDAC3 to repress proximal gene expression. Interacts with histone deacetylases HDAC2, HDAC5 and HDAC9 (via the catalytic domain). Interacts with ZBTB7 and BCL6B. Interacts with SCF(FBXO11) complex; the interaction is independent of phosphorylation and promotes ubiquitination. Interacts (when phosphorylated) with PIN1; the interaction is required for BCL6 degradation upon genotoxic stress. Interacts with ZBTB17; inhibits ZBTB17 transcriptional activity. Interacts with CTBP1, autoinhibits its transcriptional expression. Interacts with NOTCH1 NCID and SIRT1; leads to a epigenetic repression of selective NOTCH1-target genes. Interacts (nor via BTB domain neither acetylated) with the NuRD complex components CHD4, HDAC1, MBD3 and MTA3; the interaction with MTA3 inhibits BCL6 acetylation and is required for BCL6 transpriptional repression. Phosphorylated by MAPK1 in response to antigen receptor activation at Ser-334 and Ser-344. Phosphorylated by ATM in response to genotoxic stress. Phosphorylation induces its degradation by ubiquitin/proteasome pathway. In terms of processing, polyubiquitinated. Polyubiquitinated by SCF(FBXO11), leading to its degradation by the proteasome. Ubiquitinated by the SCF(FBXL17) complex, leading to its degradation by the proteasome: ubiquitination by the SCF(FBXL17) complex takes place when aberrant BTB domain dimers are formed. Post-translationally, acetylated at Lys-380 by EP300 which inhibits the interaction with NuRD complex and the transcriptional repressor function. Deacetylated by HDAC- and SIR2-dependent pathways. As to expression, expressed at least in germinal center B-cells of spleen.

The protein resides in the nucleus. Functionally, transcriptional repressor mainly required for germinal center (GC) formation and antibody affinity maturation which has different mechanisms of action specific to the lineage and biological functions. Forms complexes with different corepressors and histone deacetylases to repress the transcriptional expression of different subsets of target genes. Represses its target genes by binding directly to the DNA sequence 5'-TTCCTAGAA-3' (BCL6-binding site) or indirectly by repressing the transcriptional activity of transcription factors. In GC B-cells, represses genes that function in differentiation, inflammation, apoptosis and cell cycle control, also autoregulates its transcriptional expression and up-regulates, indirectly, the expression of some genes important for GC reactions, such as AICDA, through the repression of microRNAs expression, like miR155. An important function is to allow GC B-cells to proliferate very rapidly in response to T-cell dependent antigens and tolerate the physiological DNA breaks required for immunglobulin class switch recombination and somatic hypermutation without inducing a p53/TP53-dependent apoptotic response. In follicular helper CD4(+) T-cells (T(FH) cells), promotes the expression of T(FH)-related genes but inhibits the differentiation of T(H)1, T(H)2 and T(H)17 cells. Also required for the establishment and maintenance of immunological memory for both T- and B-cells. Suppresses macrophage proliferation through competition with STAT5 for STAT-binding motifs binding on certain target genes, such as CCL2 and CCND2. In response to genotoxic stress, controls cell cycle arrest in GC B-cells in both p53/TP53-dependedent and -independent manners. Besides, also controls neurogenesis through the alteration of the composition of NOTCH-dependent transcriptional complexes at selective NOTCH targets, such as HES5, including the recruitment of the deacetylase SIRT1 and resulting in an epigenetic silencing leading to neuronal differentiation. This chain is B-cell lymphoma 6 protein homolog (Bcl6), found in Mus musculus (Mouse).